A 186-amino-acid polypeptide reads, in one-letter code: Probable calcium-binding protein CML25 (186 aa).

The segment covering 1–17 (MFNKNQGSNGGSSSNVG) has biased composition (low complexity). A disordered region spans residues 1–23 (MFNKNQGSNGGSSSNVGIGADSP). 4 EF-hand domains span residues 33–68 (TEIR…LGHE), 69–104 (VPEE…GMDQ), 106–141 (DVLE…LGDE), and 142–177 (CSIA…GSRR). Residues Asp46, Asn48, Asp50, Lys52, and Glu57 each contribute to the Ca(2+) site. Residues Asp119, Asp121, Asn123, Ser125, Glu130, Asp155, Asp157, Asp159, Thr161, and Glu166 each coordinate Ca(2+).

Potential calcium sensor. This Arabidopsis thaliana (Mouse-ear cress) protein is Probable calcium-binding protein CML25 (CML25).